Consider the following 286-residue polypeptide: GTP-binding protein 8 (286 aa).

In terms of domain architecture, EngB-type G spans 105–278 (KQPEVCFMGR…RCFIAHVTGK (174 aa)). GTP contacts are provided by residues 113–120 (GRSNVGKS), 142–146 (GHTKK), 160–163 (DMPG), 222–225 (TKID), and 257–259 (VSS). Positions 120 and 144 each coordinate Mg(2+).

Belongs to the TRAFAC class TrmE-Era-EngA-EngB-Septin-like GTPase superfamily. EngB GTPase family. Mg(2+) serves as cofactor.

The protein is GTP-binding protein 8 (gtpbp8) of Danio rerio (Zebrafish).